A 245-amino-acid chain; its full sequence is 1-(5-phosphoribosyl)-5-[(5-phosphoribosylamino)methylideneamino] imidazole-4-carboxamide isomerase (245 aa).

Catalysis depends on aspartate 8, which acts as the Proton acceptor. Aspartate 129 serves as the catalytic Proton donor.

This sequence belongs to the HisA/HisF family.

Its subcellular location is the cytoplasm. It catalyses the reaction 1-(5-phospho-beta-D-ribosyl)-5-[(5-phospho-beta-D-ribosylamino)methylideneamino]imidazole-4-carboxamide = 5-[(5-phospho-1-deoxy-D-ribulos-1-ylimino)methylamino]-1-(5-phospho-beta-D-ribosyl)imidazole-4-carboxamide. Its pathway is amino-acid biosynthesis; L-histidine biosynthesis; L-histidine from 5-phospho-alpha-D-ribose 1-diphosphate: step 4/9. In Heliobacterium modesticaldum (strain ATCC 51547 / Ice1), this protein is 1-(5-phosphoribosyl)-5-[(5-phosphoribosylamino)methylideneamino] imidazole-4-carboxamide isomerase.